We begin with the raw amino-acid sequence, 473 residues long: 3-isopropylmalate dehydratase large subunit 2 (473 aa).

Residues C350, C410, and C413 each contribute to the [4Fe-4S] cluster site.

The protein belongs to the aconitase/IPM isomerase family. LeuC type 1 subfamily. As to quaternary structure, heterodimer of LeuC and LeuD. [4Fe-4S] cluster is required as a cofactor.

It catalyses the reaction (2R,3S)-3-isopropylmalate = (2S)-2-isopropylmalate. It functions in the pathway amino-acid biosynthesis; L-leucine biosynthesis; L-leucine from 3-methyl-2-oxobutanoate: step 2/4. Functionally, catalyzes the isomerization between 2-isopropylmalate and 3-isopropylmalate, via the formation of 2-isopropylmaleate. The sequence is that of 3-isopropylmalate dehydratase large subunit 2 from Salmonella typhimurium (strain LT2 / SGSC1412 / ATCC 700720).